A 79-amino-acid polypeptide reads, in one-letter code: Acyl carrier protein (79 aa).

The Carrier domain occupies 2 to 77; it reads SDVAERVKKI…DAVNFLEKAT (76 aa). Ser-37 is modified (O-(pantetheine 4'-phosphoryl)serine).

Belongs to the acyl carrier protein (ACP) family. In terms of processing, 4'-phosphopantetheine is transferred from CoA to a specific serine of apo-ACP by AcpS. This modification is essential for activity because fatty acids are bound in thioester linkage to the sulfhydryl of the prosthetic group.

It localises to the cytoplasm. It participates in lipid metabolism; fatty acid biosynthesis. Functionally, carrier of the growing fatty acid chain in fatty acid biosynthesis. This is Acyl carrier protein from Methylocella silvestris (strain DSM 15510 / CIP 108128 / LMG 27833 / NCIMB 13906 / BL2).